Here is a 175-residue protein sequence, read N- to C-terminus: Electron transport protein HydN (175 aa).

4 4Fe-4S ferredoxin-type domains span residues 2–32, 48–79, 80–109, and 124–157; these read NRFI…NQDC, KGVN…SRDK, GFVH…VVVR, and DKAE…CVDR. Residues Cys-12, Cys-15, Cys-18, Cys-22, Cys-58, Cys-61, Cys-66, Cys-70, Cys-89, Cys-92, Cys-95, Cys-99, Cys-131, Cys-134, Cys-143, and Cys-147 each contribute to the [4Fe-4S] cluster site.

[4Fe-4S] cluster serves as cofactor.

In terms of biological role, electron transport from formate to hydrogen. This Escherichia coli O157:H7 protein is Electron transport protein HydN (hydN).